Reading from the N-terminus, the 62-residue chain is Sperm protamine P1 (62 aa).

The tract at residues 1–62 (MARYRHSRSR…RYSRRRRRRY (62 aa)) is disordered.

It belongs to the protamine P1 family. Testis.

The protein localises to the nucleus. The protein resides in the chromosome. Protamines substitute for histones in the chromatin of sperm during the haploid phase of spermatogenesis. They compact sperm DNA into a highly condensed, stable and inactive complex. The chain is Sperm protamine P1 (PRM1) from Notamacropus eugenii (Tammar wallaby).